A 328-amino-acid chain; its full sequence is Neuronal membrane glycoprotein M6-b (328 aa).

The interval 1 to 22 (MKPAMETAAEENTEQSQERKVN) is disordered. The helical transmembrane segment at 71 to 91 (GGVPYASLVATILCFSGVALF) threads the bilayer. N113 is a glycosylation site (N-linked (GlcNAc...) asparagine). The next 2 helical transmembrane spans lie at 130–150 (VIYGIASFFFLYGIILLAEGF) and 176–196 (FVFLTYVLGVAWLGVFGFSAV). A glycan (N-linked (GlcNAc...) asparagine) is linked at N217. Residues 265–285 (FIVACAGAGATVIALIHFLMI) form a helical membrane-spanning segment. 3 positions are modified to phosphoserine: S318, S320, and S326.

The protein belongs to the myelin proteolipid protein family. In terms of assembly, interacts with SERT. As to expression, widely expressed. In the brain, expressed in neurons and oligodendrocytes.

It is found in the membrane. It localises to the cell membrane. May be involved in neural development. Involved in regulation of osteoblast function and bone formation. Involved in matrix vesicle release by osteoblasts; this function seems to involve maintenance of the actin cytoskeleton. May be involved in cellular trafficking of SERT and thereby in regulation of serotonin uptake. This is Neuronal membrane glycoprotein M6-b (Gpm6b) from Mus musculus (Mouse).